Reading from the N-terminus, the 234-residue chain is MHSTMSVQHGLVALVLIGCLAHPWHVEACSSRTVPKPRSSISSSMSGTALPPTQAPVTSSTTMRTTTTTTPRPNITFPTYKCPETFDAWYCLNDAHCFAVKIADLPVYSCECAIGFMGQRCEYKEIDNTYLPKRPRPMLEKASIASGAMCALVFMLFVCLAFYLRFEQRAAKKAYELEQELQQEYDDDDGQCECCRNRCCPDGQEPVILERKLPYHMRLEHALMSFAIRRSNKL.

Residues 1 to 28 (MHSTMSVQHGLVALVLIGCLAHPWHVEA) form the signal peptide. At 29–143 (CSSRTVPKPR…RPRPMLEKAS (115 aa)) the chain is on the lumenal side. Residues 33-71 (TVPKPRSSISSSMSGTALPPTQAPVTSSTTMRTTTTTTP) are disordered. The span at 56–71 (PVTSSTTMRTTTTTTP) shows a compositional bias: low complexity. Asn74 carries an N-linked (GlcNAc...) asparagine glycan. The region spanning 78 to 122 (PTYKCPETFDAWYCLNDAHCFAVKIADLPVYSCECAIGFMGQRCE) is the EGF-like domain. 3 cysteine pairs are disulfide-bonded: Cys82-Cys97, Cys91-Cys110, and Cys112-Cys121. The chain crosses the membrane as a helical span at residues 144–164 (IASGAMCALVFMLFVCLAFYL). At 165-234 (RFEQRAAKKA…SFAIRRSNKL (70 aa)) the chain is on the cytoplasmic side.

Interacts with Star via the lumenal domain. Post-translationally, proteolytic processing by Rhomboid occurs in the Golgi. Cleavage takes place within the transmembrane domain close to residue 144 and the active growth factor is released. N-glycosylated and O-glycosylated. As to expression, expressed throughout the embryo.

The protein resides in the cell membrane. Its subcellular location is the endoplasmic reticulum membrane. The protein localises to the golgi apparatus membrane. Ligand for the EGF receptor (Gurken). Involved in a number of unrelated developmental choices, for example, dorsal-ventral axis formation, glial migration, sensory organ determination, and muscle development. It is required for photoreceptor determination. The polypeptide is Protein spitz (spi) (Drosophila melanogaster (Fruit fly)).